A 328-amino-acid polypeptide reads, in one-letter code: Phosphate acyltransferase (328 aa).

It belongs to the PlsX family. In terms of assembly, homodimer. Probably interacts with PlsY.

The protein localises to the cytoplasm. The catalysed reaction is a fatty acyl-[ACP] + phosphate = an acyl phosphate + holo-[ACP]. It functions in the pathway lipid metabolism; phospholipid metabolism. Its function is as follows. Catalyzes the reversible formation of acyl-phosphate (acyl-PO(4)) from acyl-[acyl-carrier-protein] (acyl-ACP). This enzyme utilizes acyl-ACP as fatty acyl donor, but not acyl-CoA. The chain is Phosphate acyltransferase from Staphylococcus saprophyticus subsp. saprophyticus (strain ATCC 15305 / DSM 20229 / NCIMB 8711 / NCTC 7292 / S-41).